A 120-amino-acid polypeptide reads, in one-letter code: NAD(P)H-quinone oxidoreductase subunit 3, chloroplastic (120 aa).

The next 3 helical transmembrane spans lie at 9-29 (IFWT…LISG), 64-84 (MFAL…PWAM), and 88-108 (VLGV…IVGS).

It belongs to the complex I subunit 3 family. NDH is composed of at least 16 different subunits, 5 of which are encoded in the nucleus.

It localises to the plastid. The protein resides in the chloroplast thylakoid membrane. It carries out the reaction a plastoquinone + NADH + (n+1) H(+)(in) = a plastoquinol + NAD(+) + n H(+)(out). The catalysed reaction is a plastoquinone + NADPH + (n+1) H(+)(in) = a plastoquinol + NADP(+) + n H(+)(out). Functionally, NDH shuttles electrons from NAD(P)H:plastoquinone, via FMN and iron-sulfur (Fe-S) centers, to quinones in the photosynthetic chain and possibly in a chloroplast respiratory chain. The immediate electron acceptor for the enzyme in this species is believed to be plastoquinone. Couples the redox reaction to proton translocation, and thus conserves the redox energy in a proton gradient. In Piper cenocladum (Ant piper), this protein is NAD(P)H-quinone oxidoreductase subunit 3, chloroplastic.